A 611-amino-acid polypeptide reads, in one-letter code: Dihydroxy-acid dehydratase (611 aa).

Residue Asp81 participates in Mg(2+) binding. Cys122 lines the [2Fe-2S] cluster pocket. The Mg(2+) site is built by Asp123 and Lys124. Lys124 carries the N6-carboxylysine modification. Cys195 serves as a coordination point for [2Fe-2S] cluster. Residue Glu491 participates in Mg(2+) binding. Ser517 functions as the Proton acceptor in the catalytic mechanism.

The protein belongs to the IlvD/Edd family. In terms of assembly, homodimer. The cofactor is [2Fe-2S] cluster. Mg(2+) serves as cofactor.

It catalyses the reaction (2R)-2,3-dihydroxy-3-methylbutanoate = 3-methyl-2-oxobutanoate + H2O. The enzyme catalyses (2R,3R)-2,3-dihydroxy-3-methylpentanoate = (S)-3-methyl-2-oxopentanoate + H2O. It functions in the pathway amino-acid biosynthesis; L-isoleucine biosynthesis; L-isoleucine from 2-oxobutanoate: step 3/4. It participates in amino-acid biosynthesis; L-valine biosynthesis; L-valine from pyruvate: step 3/4. Its function is as follows. Functions in the biosynthesis of branched-chain amino acids. Catalyzes the dehydration of (2R,3R)-2,3-dihydroxy-3-methylpentanoate (2,3-dihydroxy-3-methylvalerate) into 2-oxo-3-methylpentanoate (2-oxo-3-methylvalerate) and of (2R)-2,3-dihydroxy-3-methylbutanoate (2,3-dihydroxyisovalerate) into 2-oxo-3-methylbutanoate (2-oxoisovalerate), the penultimate precursor to L-isoleucine and L-valine, respectively. This Brucella melitensis biotype 1 (strain ATCC 23456 / CCUG 17765 / NCTC 10094 / 16M) protein is Dihydroxy-acid dehydratase.